A 160-amino-acid polypeptide reads, in one-letter code: Phosphopantetheine adenylyltransferase (160 aa).

Serine 9 contributes to the substrate binding site. ATP is bound by residues 9 to 10 and histidine 17; that span reads SF. Residues lysine 41, threonine 73, and arginine 87 each coordinate substrate. Residues 88–90, glutamate 98, and 123–129 each bind ATP; these read GMR and YTFFSSS.

The protein belongs to the bacterial CoaD family. In terms of assembly, homohexamer. Mg(2+) is required as a cofactor.

The protein localises to the cytoplasm. It catalyses the reaction (R)-4'-phosphopantetheine + ATP + H(+) = 3'-dephospho-CoA + diphosphate. Its pathway is cofactor biosynthesis; coenzyme A biosynthesis; CoA from (R)-pantothenate: step 4/5. In terms of biological role, reversibly transfers an adenylyl group from ATP to 4'-phosphopantetheine, yielding dephospho-CoA (dPCoA) and pyrophosphate. This Roseiflexus sp. (strain RS-1) protein is Phosphopantetheine adenylyltransferase.